Consider the following 304-residue polypeptide: Lipid droplet-associated triacylglycerol lipase (304 aa).

The Lumenal portion of the chain corresponds to 1–155 (MTVKEYTKSK…MGIKMTAALR (155 aa)). N-linked (GlcNAc...) asparagine glycosylation occurs at N95. The GXSXG signature appears at 107 to 111 (GHSVG). Residue S109 is the Nucleophile of the active site. An intramembrane segment occupies 156–176 (YIPPLAHVVSLFSYIFFYWIL). Residues 177–304 (SEGFSRFIID…HAEYAINAFF (128 aa)) lie on the Lumenal side of the membrane.

This sequence belongs to the AB hydrolase superfamily. LDAH family.

The protein resides in the lipid droplet. Its subcellular location is the membrane. The catalysed reaction is a triacylglycerol + H2O = a diacylglycerol + a fatty acid + H(+). Its function is as follows. Shows both triacylglycerol (TAG) lipase and ester hydrolase activities. May play a role in TAG homeostasis. The protein is Lipid droplet-associated triacylglycerol lipase of Saccharomyces cerevisiae (strain ATCC 204508 / S288c) (Baker's yeast).